We begin with the raw amino-acid sequence, 424 residues long: Serine--tRNA ligase (424 aa).

L-serine is bound at residue 232–234 (TAE). 263–265 (RRE) serves as a coordination point for ATP. Glutamate 286 contributes to the L-serine binding site. 350–353 (EISS) lines the ATP pocket. Serine 384 contacts L-serine.

It belongs to the class-II aminoacyl-tRNA synthetase family. Type-1 seryl-tRNA synthetase subfamily. Homodimer. The tRNA molecule binds across the dimer.

The protein localises to the cytoplasm. The catalysed reaction is tRNA(Ser) + L-serine + ATP = L-seryl-tRNA(Ser) + AMP + diphosphate + H(+). It catalyses the reaction tRNA(Sec) + L-serine + ATP = L-seryl-tRNA(Sec) + AMP + diphosphate + H(+). Its pathway is aminoacyl-tRNA biosynthesis; selenocysteinyl-tRNA(Sec) biosynthesis; L-seryl-tRNA(Sec) from L-serine and tRNA(Sec): step 1/1. Functionally, catalyzes the attachment of serine to tRNA(Ser). Is also able to aminoacylate tRNA(Sec) with serine, to form the misacylated tRNA L-seryl-tRNA(Sec), which will be further converted into selenocysteinyl-tRNA(Sec). The chain is Serine--tRNA ligase from Prochlorococcus marinus subsp. pastoris (strain CCMP1986 / NIES-2087 / MED4).